The chain runs to 291 residues: Bis(5'-nucleosyl)-tetraphosphatase, symmetrical (291 aa).

Belongs to the Ap4A hydrolase family.

It catalyses the reaction P(1),P(4)-bis(5'-adenosyl) tetraphosphate + H2O = 2 ADP + 2 H(+). Its function is as follows. Hydrolyzes diadenosine 5',5'''-P1,P4-tetraphosphate to yield ADP. The chain is Bis(5'-nucleosyl)-tetraphosphatase, symmetrical from Coxiella burnetii (strain RSA 331 / Henzerling II).